The chain runs to 248 residues: Ribonuclease HII (248 aa).

The region spanning 29–219 (DIVCGVDEAG…VREAHLRLGT (191 aa)) is the RNase H type-2 domain. Positions 35, 36, and 128 each coordinate a divalent metal cation.

Belongs to the RNase HII family. The cofactor is Mn(2+). Mg(2+) is required as a cofactor.

It is found in the cytoplasm. The enzyme catalyses Endonucleolytic cleavage to 5'-phosphomonoester.. Endonuclease that specifically degrades the RNA of RNA-DNA hybrids. This Paraburkholderia xenovorans (strain LB400) protein is Ribonuclease HII.